Here is a 67-residue protein sequence, read N- to C-terminus: MKFAPMDKVKFKTASHLNKLRTLKKRVPELDDPLLGECWEFEEDGLRQFDWEENYEFVARPKHFNWD.

The sequence is that of SPbeta prophage-derived uncharacterized protein YoqF (yoqF) from Bacillus subtilis (strain 168).